Reading from the N-terminus, the 583-residue chain is DNA ligase (583 aa).

Glutamate 249 serves as a coordination point for ATP. Lysine 251 acts as the N6-AMP-lysine intermediate in catalysis. ATP is bound by residues arginine 256, arginine 271, glutamate 301, phenylalanine 341, arginine 416, and lysine 422.

It belongs to the ATP-dependent DNA ligase family. Mg(2+) serves as cofactor.

The enzyme catalyses ATP + (deoxyribonucleotide)n-3'-hydroxyl + 5'-phospho-(deoxyribonucleotide)m = (deoxyribonucleotide)n+m + AMP + diphosphate.. In terms of biological role, DNA ligase that seals nicks in double-stranded DNA during DNA replication, DNA recombination and DNA repair. This Pyrobaculum calidifontis (strain DSM 21063 / JCM 11548 / VA1) protein is DNA ligase.